We begin with the raw amino-acid sequence, 801 residues long: MLVSYKWLKELVDIDVTPAALAEKMSTTGIEVEGIEVPAEGLSKLVVGHVLSCEDVPETHLHLCQVDTGDETPRQIVCGAPNVKAGIKVIVAVPGARIADNYKIKKGKIRGMESLGMICSLQELGLSDSIIPKEFSDGIQILPEEAVPGDAIFKYLDLDDHIIELSITPNRADALSMRGVAHEVAAIYGKSVSFPQKNLQESDKATSEAIEVAIASDKVLTYASRVVENVKVKPSPQWLQNLLMNAGIRPINNVVDVTNYVLLYFGQPMHAFDYDKFEDHKIVARAARQGESLVTLDGEKRDLTTEDLVITVADKPVALAGVMGGQATEIDGNSQTVVLEAAVFDGKSIRKTSGRLNLRSESSSRFEKGVNYATVLEALDFAAAMLQELAEGQVLSGHVQAGQLPTEPVEVSTSLDYVNVRLGTELTFADIQRIFDQLGFGLTGDETRFTVAVPRRRWDISIPADLVEEIARIYGYDKLPTTLPEAGGTAAELTPTQALRRKVRGLAEGLGLTEIISYALTTPEKAIEFAVAPSHLTELMWPMSVERSALRQNMVSGMLDTVAYNVARKQSNLALYEIGKIFEQEVNPKEDLPNEVNHFAFAICGLVAQKDFQTQAQAVDFYHAKGILDTLFANLNLKVQYVPTKDLANMHPGRTALILLDEQVIGFVGQVHPGTAKAYSIPETYVAELDMAALEAALPSDQTFAEITKFPAMTRDIALLLDREVSHQAIVTAIESAGVKRLTSIKLFDVYEGATIQAGKKSMAYSLTFQNPNDNLTDEEVAKYMEKITKSLTEQVGAEVR.

Residues 39–153 (AEGLSKLVVG…EEAVPGDAIF (115 aa)) form the tRNA-binding domain. The B5 domain maps to 406 to 481 (TEPVEVSTSL…RIYGYDKLPT (76 aa)). Mg(2+) contacts are provided by D459, D465, E468, and E469. In terms of domain architecture, FDX-ACB spans 708–801 (TKFPAMTRDI…LTEQVGAEVR (94 aa)).

It belongs to the phenylalanyl-tRNA synthetase beta subunit family. Type 1 subfamily. As to quaternary structure, tetramer of two alpha and two beta subunits. The cofactor is Mg(2+).

The protein resides in the cytoplasm. It catalyses the reaction tRNA(Phe) + L-phenylalanine + ATP = L-phenylalanyl-tRNA(Phe) + AMP + diphosphate + H(+). The sequence is that of Phenylalanine--tRNA ligase beta subunit from Streptococcus pyogenes serotype M18 (strain MGAS8232).